The primary structure comprises 131 residues: Large ribosomal subunit protein bL17 (131 aa).

This sequence belongs to the bacterial ribosomal protein bL17 family. In terms of assembly, part of the 50S ribosomal subunit. Contacts protein L32.

This Nitrosospira multiformis (strain ATCC 25196 / NCIMB 11849 / C 71) protein is Large ribosomal subunit protein bL17.